Here is a 54-residue protein sequence, read N- to C-terminus: Ovomucoid (54 aa).

The 51-residue stretch at 4 to 54 folds into the Kazal-like domain; it reads VDCSDYPKPVCPLDYMPLCGSDSKTYSNKCNFCNAVVESSGTLTLRHFGKC. 3 disulfides stabilise this stretch: Cys-6-Cys-36, Cys-14-Cys-33, and Cys-22-Cys-54.

Post-translationally, this is the only ovomucoid third domain known to be not glycosylated.

The protein resides in the secreted. This Struthio camelus (Common ostrich) protein is Ovomucoid.